Consider the following 562-residue polypeptide: Probable sesquiterpene synthase (562 aa).

Residues Asp-315, Asp-319, and Glu-467 each contribute to the Mg(2+) site. The DDXXD motif motif lies at 315–319; sequence DDIYD.

Belongs to the terpene synthase family. Tpsa subfamily. Mg(2+) serves as cofactor. It depends on Mn(2+) as a cofactor.

Sesquiterpene synthase. This Santalum murrayanum (Bitter quandong) protein is Probable sesquiterpene synthase (STPS).